The sequence spans 153 residues: Cytochrome c-type biogenesis protein CcmE (153 aa).

The Cytoplasmic portion of the chain corresponds to 1 to 8 (MTTRRGRR). Residues 9 to 29 (ALLIAGGVGLLALAAALVLNA) traverse the membrane as a helical; Signal-anchor for type II membrane protein segment. Residues 30–153 (LRSNLVFFFS…PSATLQTEAR (124 aa)) are Periplasmic-facing. Heme is bound by residues His124 and Tyr128.

Belongs to the CcmE/CycJ family.

The protein localises to the cell inner membrane. Its function is as follows. Heme chaperone required for the biogenesis of c-type cytochromes. Transiently binds heme delivered by CcmC and transfers the heme to apo-cytochromes in a process facilitated by CcmF and CcmH. The sequence is that of Cytochrome c-type biogenesis protein CcmE from Bordetella parapertussis (strain 12822 / ATCC BAA-587 / NCTC 13253).